The primary structure comprises 949 residues: Probable transcriptional regulatory protein STB4 (949 aa).

A DNA-binding region (zn(2)-C6 fungal-type) is located at residues 87-113; sequence CELCKKRKVKCDGNNPCLNCSKHQKEC. 2 stretches are compositionally biased toward low complexity: residues 164–178 and 200–212; these read DGVS…NPNS and SGSN…NNNS. 2 disordered regions span residues 164–214 and 862–888; these read DGVS…NSFP and GERE…ATRS. Residues 862–874 show a composition bias toward basic and acidic residues; sequence GEREENADERQEN.

The protein resides in the nucleus. Its function is as follows. Binds to SIN3. The sequence is that of Probable transcriptional regulatory protein STB4 (STB4) from Saccharomyces cerevisiae (strain ATCC 204508 / S288c) (Baker's yeast).